A 413-amino-acid chain; its full sequence is Serine/threonine transporter SstT (413 aa).

Transmembrane regions (helical) follow at residues 22–42 (GLLLGLLLALIAPSLQGVLGF), 61–81 (AVAPILVFLLVISAIANKQLG), 89–109 (IVVLYLLGTFLAALTSVLFSF), 148–168 (ALFNANFIGILFWAIGLGIAL), 189–209 (IVHFIISFAPIGVFGLVAETL), 224–244 (LVVLIGSMLFTAFVINPILVF), 305–325 (MAGAAITITVLTLAAVHTLGI), 337–357 (VVASICACGASGVAGGSLLLI), and 363–383 (LFGIPNDIAAQVIGVGFVIGV).

Belongs to the dicarboxylate/amino acid:cation symporter (DAACS) (TC 2.A.23) family.

Its subcellular location is the cell inner membrane. It carries out the reaction L-serine(in) + Na(+)(in) = L-serine(out) + Na(+)(out). The catalysed reaction is L-threonine(in) + Na(+)(in) = L-threonine(out) + Na(+)(out). In terms of biological role, involved in the import of serine and threonine into the cell, with the concomitant import of sodium (symport system). This is Serine/threonine transporter SstT from Histophilus somni (strain 129Pt) (Haemophilus somnus).